We begin with the raw amino-acid sequence, 606 residues long: Vitamin B12 transporter BtuB (606 aa).

An N-terminal signal peptide occupies residues 1–22 (MQKSLLAIAMASLLTPVSYLHA). The TonB box signature appears at 29–36 (DTVVVTAN). Residues 41-153 (PLAEVIASTT…IAGVINVITT (113 aa)) enclose the TBDR plug domain. A TBDR beta-barrel domain is found at 158-606 (SEGSVVSLGA…RYFANLTYQF (449 aa)). The short motif at 589-606 (LSYNAPERRYFANLTYQF) is the TonB C-terminal box element.

The protein belongs to the TonB-dependent receptor family. BtuB (TC 1.B.14.3.1) subfamily.

It localises to the cell outer membrane. In terms of biological role, involved in the active translocation of vitamin B12 (cyanocobalamin) across the outer membrane to the periplasmic space. It derives its energy for transport by interacting with the trans-periplasmic membrane protein TonB. The chain is Vitamin B12 transporter BtuB from Vibrio vulnificus (strain CMCP6).